Reading from the N-terminus, the 164-residue chain is Peptidyl-prolyl cis-trans isomerase (164 aa).

Residues 7-163 (FFDLQANGEN…KKITIADCGQ (157 aa)) enclose the PPIase cyclophilin-type domain.

Belongs to the cyclophilin-type PPIase family. PPIase A subfamily.

It localises to the cytoplasm. The catalysed reaction is [protein]-peptidylproline (omega=180) = [protein]-peptidylproline (omega=0). Its activity is regulated as follows. Binds cyclosporin A (CsA). CsA mediates some of its effects via an inhibitory action on PPIase. Functionally, PPIases accelerate the folding of proteins. It catalyzes the cis-trans isomerization of proline imidic peptide bonds in oligopeptides. The sequence is that of Peptidyl-prolyl cis-trans isomerase from Hemicentrotus pulcherrimus (Sea urchin).